A 355-amino-acid polypeptide reads, in one-letter code: dTDP-glucose 4,6-dehydratase (355 aa).

NAD(+) contacts are provided by residues 12–13 (FI), 33–36 (DKLT), 59–60 (DI), 81–85 (LAAES), and T100. S85 contributes to the substrate binding site. T134 serves as a coordination point for substrate. Residue D135 is the Proton donor of the active site. Catalysis depends on proton acceptor residues E136 and Y160. Residue 160 to 164 (YSASK) participates in NAD(+) binding. Residue N189 coordinates substrate. N190 contributes to the NAD(+) binding site. Residues 199–200 (KL), 215–217 (PVY), R224, N259, and 293–297 (DRPGH) contribute to the substrate site.

It belongs to the NAD(P)-dependent epimerase/dehydratase family. dTDP-glucose dehydratase subfamily. As to quaternary structure, homodimer. It depends on NAD(+) as a cofactor.

The catalysed reaction is dTDP-alpha-D-glucose = dTDP-4-dehydro-6-deoxy-alpha-D-glucose + H2O. The protein operates within carbohydrate biosynthesis; dTDP-L-rhamnose biosynthesis. It functions in the pathway bacterial outer membrane biogenesis; LPS O-antigen biosynthesis. Catalyzes the dehydration of dTDP-D-glucose to form dTDP-6-deoxy-D-xylo-4-hexulose via a three-step process involving oxidation, dehydration and reduction. The sequence is that of dTDP-glucose 4,6-dehydratase (rfbB1) from Neisseria meningitidis serogroup B (strain ATCC BAA-335 / MC58).